Reading from the N-terminus, the 125-residue chain is Probable endoribonuclease HigB1 (125 aa).

It belongs to the mycobacterial HigB family.

Its function is as follows. Toxic component of an atypical, type II toxin-antitoxin chaperone (TAC) system. Probably an endoribonuclease, neutralized by its cognate antitoxin HigA which also requires SecB-like chaperone MT2006 (AC Q7D7P7). The polypeptide is Probable endoribonuclease HigB1 (Mycobacterium tuberculosis (strain CDC 1551 / Oshkosh)).